Reading from the N-terminus, the 373-residue chain is Lipoyl amidotransferase LIPT1, mitochondrial (373 aa).

Residues 1–25 (MLIPLSMKNCFRLLCQHKVPAAGFK) constitute a mitochondrion transit peptide. The region spanning 57-243 (LEGKPILFLW…EYAAHHQVDG (187 aa)) is the BPL/LPL catalytic domain. Residues tyrosine 107, lysine 151, lysine 161, and threonine 179 each contribute to the (R)-lipoyl-5'-AMP site.

This sequence belongs to the LplA family.

It localises to the mitochondrion. It carries out the reaction (R)-lipoyl-5'-AMP + L-lysyl-[lipoyl-carrier protein] = N(6)-[(R)-lipoyl]-L-lysyl-[lipoyl-carrier protein] + AMP + 2 H(+). The catalysed reaction is N(6)-[(R)-lipoyl]-L-lysyl-[glycine-cleavage complex H protein] + L-lysyl-[lipoyl-carrier protein] = L-lysyl-[glycine-cleavage complex H protein] + N(6)-[(R)-lipoyl]-L-lysyl-[lipoyl-carrier protein]. It functions in the pathway protein modification; protein lipoylation via exogenous pathway; protein N(6)-(lipoyl)lysine from lipoate: step 2/2. Lipoyl amidotransferase that catalyzes the transfer of lipoyl moieties from lipoyl-protein H of the glycine cleavage system (lipoyl-GCSH) to E2 subunits of the pyruvate dehydrogenase complex (PDCE2). Unable to catalyze the transfer of octanoyl from octanoyl-GCSH to PDCE2. In vitro, it is also able to catalyze the transfer of the lipoyl group from lipoyl-AMP to the specific lysine residue of lipoyl domains of lipoate-dependent enzymes but this reaction may not be physiologically relevant. This chain is Lipoyl amidotransferase LIPT1, mitochondrial, found in Mus musculus (Mouse).